Here is a 445-residue protein sequence, read N- to C-terminus: Xylose isomerase (445 aa).

Residues His99 and Asp102 contribute to the active site. Residues Glu230, Glu266, His269, Asp294, Asp305, Asp307, and Asp337 each coordinate Mg(2+).

It belongs to the xylose isomerase family. As to quaternary structure, homotetramer. The cofactor is Mg(2+).

The protein resides in the cytoplasm. It carries out the reaction alpha-D-xylose = alpha-D-xylulofuranose. This Geobacillus thermodenitrificans (strain NG80-2) protein is Xylose isomerase.